A 159-amino-acid chain; its full sequence is Acetolactate synthase small subunit (159 aa).

Residues 5–79 (ILSILLENES…DVLKVTEIED (75 aa)) form the ACT domain.

This sequence belongs to the acetolactate synthase small subunit family. Dimer of large and small chains.

The catalysed reaction is 2 pyruvate + H(+) = (2S)-2-acetolactate + CO2. It participates in amino-acid biosynthesis; L-isoleucine biosynthesis; L-isoleucine from 2-oxobutanoate: step 1/4. The protein operates within amino-acid biosynthesis; L-valine biosynthesis; L-valine from pyruvate: step 1/4. This chain is Acetolactate synthase small subunit (ilvH), found in Buchnera aphidicola subsp. Baizongia pistaciae (strain Bp).